The sequence spans 289 residues: Urease accessory protein UreD (289 aa).

Belongs to the UreD family. As to quaternary structure, ureD, UreF and UreG form a complex that acts as a GTP-hydrolysis-dependent molecular chaperone, activating the urease apoprotein by helping to assemble the nickel containing metallocenter of UreC. The UreE protein probably delivers the nickel.

It is found in the cytoplasm. Its function is as follows. Required for maturation of urease via the functional incorporation of the urease nickel metallocenter. This Cupriavidus pinatubonensis (strain JMP 134 / LMG 1197) (Cupriavidus necator (strain JMP 134)) protein is Urease accessory protein UreD.